The primary structure comprises 101 residues: Urease subunit beta (101 aa).

This sequence belongs to the urease beta subunit family. As to quaternary structure, heterotrimer of UreA (gamma), UreB (beta) and UreC (alpha) subunits. Three heterotrimers associate to form the active enzyme.

The protein localises to the cytoplasm. It carries out the reaction urea + 2 H2O + H(+) = hydrogencarbonate + 2 NH4(+). It functions in the pathway nitrogen metabolism; urea degradation; CO(2) and NH(3) from urea (urease route): step 1/1. This is Urease subunit beta from Burkholderia orbicola (strain AU 1054).